A 359-amino-acid chain; its full sequence is Probable dual-specificity RNA methyltransferase RlmN (359 aa).

Residue glutamate 91 is the Proton acceptor of the active site. Positions 97–329 (QHYGHSVCVT…KKNGVNCVVR (233 aa)) constitute a Radical SAM core domain. Residues cysteine 104 and cysteine 340 are joined by a disulfide bond. 3 residues coordinate [4Fe-4S] cluster: cysteine 111, cysteine 115, and cysteine 118. S-adenosyl-L-methionine is bound by residues 163–164 (GE), serine 195, 218–220 (SLH), and asparagine 296. Cysteine 340 functions as the S-methylcysteine intermediate in the catalytic mechanism.

This sequence belongs to the radical SAM superfamily. RlmN family. It depends on [4Fe-4S] cluster as a cofactor.

Its subcellular location is the cytoplasm. The enzyme catalyses adenosine(2503) in 23S rRNA + 2 reduced [2Fe-2S]-[ferredoxin] + 2 S-adenosyl-L-methionine = 2-methyladenosine(2503) in 23S rRNA + 5'-deoxyadenosine + L-methionine + 2 oxidized [2Fe-2S]-[ferredoxin] + S-adenosyl-L-homocysteine. It catalyses the reaction adenosine(37) in tRNA + 2 reduced [2Fe-2S]-[ferredoxin] + 2 S-adenosyl-L-methionine = 2-methyladenosine(37) in tRNA + 5'-deoxyadenosine + L-methionine + 2 oxidized [2Fe-2S]-[ferredoxin] + S-adenosyl-L-homocysteine. Specifically methylates position 2 of adenine 2503 in 23S rRNA and position 2 of adenine 37 in tRNAs. The sequence is that of Probable dual-specificity RNA methyltransferase RlmN from Streptococcus pyogenes serotype M2 (strain MGAS10270).